The chain runs to 488 residues: Regulatory protein ViaA (488 aa).

The protein belongs to the ViaA family. In terms of assembly, homodimer. Interacts with RavA.

It is found in the cytoplasm. Functionally, component of the RavA-ViaA chaperone complex, which may act on the membrane to optimize the function of some of the respiratory chains. ViaA stimulates the ATPase activity of RavA. In Yersinia enterocolitica serotype O:8 / biotype 1B (strain NCTC 13174 / 8081), this protein is Regulatory protein ViaA.